Reading from the N-terminus, the 248-residue chain is 3-deoxy-manno-octulosonate cytidylyltransferase (248 aa).

Belongs to the KdsB family.

The protein localises to the cytoplasm. It carries out the reaction 3-deoxy-alpha-D-manno-oct-2-ulosonate + CTP = CMP-3-deoxy-beta-D-manno-octulosonate + diphosphate. It functions in the pathway nucleotide-sugar biosynthesis; CMP-3-deoxy-D-manno-octulosonate biosynthesis; CMP-3-deoxy-D-manno-octulosonate from 3-deoxy-D-manno-octulosonate and CTP: step 1/1. It participates in bacterial outer membrane biogenesis; lipopolysaccharide biosynthesis. Activates KDO (a required 8-carbon sugar) for incorporation into bacterial lipopolysaccharide in Gram-negative bacteria. This Salmonella agona (strain SL483) protein is 3-deoxy-manno-octulosonate cytidylyltransferase.